A 303-amino-acid chain; its full sequence is Tyrosine-protein phosphatase 3 (303 aa).

In terms of domain architecture, Tyrosine-protein phosphatase spans 24 to 292; that stretch reads YMIIEGLNEE…VFLYTVSQEL (269 aa). The Phosphocysteine intermediate role is filled by cysteine 227.

It belongs to the protein-tyrosine phosphatase family. Non-receptor class subfamily.

It localises to the cytoplasm. It catalyses the reaction O-phospho-L-tyrosyl-[protein] + H2O = L-tyrosyl-[protein] + phosphate. Contributes to dephosphorylation of tyrosine 15 of cdc2. This chain is Tyrosine-protein phosphatase 3 (pyp3), found in Schizosaccharomyces pombe (strain 972 / ATCC 24843) (Fission yeast).